The primary structure comprises 96 residues: MTLVAGIDSSTQSCKVVIRDADTGVLIRSSRASHPDGTEVDPEFWFDALQEAIAQAGGLDDVAAISVGGQQHGMVALDATGAVIRPALLWNDNRSA.

71 to 72 (QH) is a binding site for substrate.

The protein belongs to the FGGY kinase family.

It carries out the reaction D-xylulose + ATP = D-xylulose 5-phosphate + ADP + H(+). Catalyzes the phosphorylation of D-xylulose to D-xylulose 5-phosphate. In Arthrobacter sp. (strain NRRL B3728), this protein is Xylulose kinase.